Consider the following 116-residue polypeptide: Large ribosomal subunit protein bL19 (116 aa).

The protein belongs to the bacterial ribosomal protein bL19 family.

This protein is located at the 30S-50S ribosomal subunit interface and may play a role in the structure and function of the aminoacyl-tRNA binding site. The sequence is that of Large ribosomal subunit protein bL19 from Pseudomonas putida (strain W619).